We begin with the raw amino-acid sequence, 284 residues long: uncharacterized protein (284 aa).

Positions 1–24 are cleaved as a signal peptide; sequence MLYSRESRTTVLFLALVTSLTVLC. Residues 25-84 lie on the Cytoplasmic side of the membrane; sequence HSVDVTTVFTTSTITEITTVTAAPQPQNKAETALNTATNIIQTMQFLFNCAPFKWKGPLK. A helical membrane pass occupies residues 85–104; sequence ITSCALNFIVLLLTAWGYLL. The Extracellular segment spans residues 105 to 284; that stretch reads KYLQENKLNS…SVHMYSSSLL (180 aa). Asn-270 is a glycosylation site (N-linked (GlcNAc...) asparagine).

To yeast YNL033w.

The protein resides in the cell membrane. This is an uncharacterized protein from Saccharomyces cerevisiae (strain ATCC 204508 / S288c) (Baker's yeast).